The following is a 236-amino-acid chain: 2,3,4,5-tetrahydropyridine-2,6-dicarboxylate N-acetyltransferase (236 aa).

This sequence belongs to the transferase hexapeptide repeat family. DapH subfamily.

The enzyme catalyses (S)-2,3,4,5-tetrahydrodipicolinate + acetyl-CoA + H2O = L-2-acetamido-6-oxoheptanedioate + CoA. Its pathway is amino-acid biosynthesis; L-lysine biosynthesis via DAP pathway; LL-2,6-diaminopimelate from (S)-tetrahydrodipicolinate (acetylase route): step 1/3. In terms of biological role, catalyzes the transfer of an acetyl group from acetyl-CoA to tetrahydrodipicolinate. This chain is 2,3,4,5-tetrahydropyridine-2,6-dicarboxylate N-acetyltransferase, found in Geobacillus sp. (strain WCH70).